We begin with the raw amino-acid sequence, 168 residues long: Endoribonuclease YbeY (168 aa).

Residues H126, H130, and H136 each coordinate Zn(2+).

This sequence belongs to the endoribonuclease YbeY family. Requires Zn(2+) as cofactor.

It localises to the cytoplasm. In terms of biological role, single strand-specific metallo-endoribonuclease involved in late-stage 70S ribosome quality control and in maturation of the 3' terminus of the 16S rRNA. The polypeptide is Endoribonuclease YbeY (Sinorhizobium medicae (strain WSM419) (Ensifer medicae)).